The primary structure comprises 79 residues: Dolichyl-diphosphooligosaccharide--protein glycosyltransferase subunit TMEM258 (79 aa).

2 helical membrane passes run 17–37 and 55–75; these read VFPH…AWFF and LISL…LLWV.

This sequence belongs to the OST5 family. Component of the oligosaccharyltransferase (OST) complex.

Its subcellular location is the membrane. It is found in the endoplasmic reticulum. The protein resides in the cytoplasm. It functions in the pathway protein modification; protein glycosylation. Functionally, subunit of the oligosaccharyl transferase (OST) complex that catalyzes the initial transfer of a defined glycan (Glc(3)Man(9)GlcNAc(2) in eukaryotes) from the lipid carrier dolichol-pyrophosphate to an asparagine residue within an Asn-X-Ser/Thr consensus motif in nascent polypeptide chains, the first step in protein N-glycosylation. N-glycosylation occurs cotranslationally and the complex associates with the Sec61 complex at the channel-forming translocon complex that mediates protein translocation across the endoplasmic reticulum (ER). All subunits are required for a maximal enzyme activity. This is Dolichyl-diphosphooligosaccharide--protein glycosyltransferase subunit TMEM258 from Gallus gallus (Chicken).